The chain runs to 249 residues: Transmembrane protein 150C (249 aa).

Topologically, residues 1–9 (MDGKKCSVW) are cytoplasmic. The chain crosses the membrane as a helical span at residues 10–30 (MFLPLVFTLFTSAGLWIVYFI). The Extracellular portion of the chain corresponds to 31 to 64 (AVEDDKILPLNSAARKSGVKHAPYISFAGDDPPA). Residues 65–85 (SCVFSQVMNMAAFLALVVAVL) form a helical membrane-spanning segment. The Cytoplasmic portion of the chain corresponds to 86 to 97 (RFIQLKPKVLNP). Residues 98-118 (WLNISGLVALCLASFGMTLLG) traverse the membrane as a helical segment. The Extracellular segment spans residues 119–130 (NFQLTNDEEIHN). The helical transmembrane segment at 131-151 (VGTSLTFGFGTLTCWIQAALT) threads the bilayer. Topologically, residues 152–168 (LKVNIKNEGRRAGIPRV) are cytoplasmic. The chain crosses the membrane as a helical span at residues 169 to 189 (ILSAVITLCVVLYFILMAQDI). Topologically, residues 190-192 (HMY) are extracellular. The helical transmembrane segment at 193–213 (AARVQWGLVMCFLAYFGTLAV) threads the bilayer. Over 214 to 249 (EFRHYRYEIVCSEYQENFLSFSESLSEASEYQTDQV) the chain is Cytoplasmic.

Belongs to the DRAM/TMEM150 family.

The protein resides in the cell membrane. It localises to the lysosome membrane. The catalysed reaction is Ca(2+)(in) = Ca(2+)(out). It catalyses the reaction Na(+)(in) = Na(+)(out). It carries out the reaction K(+)(in) = K(+)(out). The enzyme catalyses Mg(2+)(in) = Mg(2+)(out). Functionally, nonselective cationic channel with high permeability to Ca(2+). Component of a mechanosensitive cation channel. Confers mechanically activated (MA) currents with slow inactivation kinetics. May contribute to proprioception. The sequence is that of Transmembrane protein 150C (Tmem150c) from Rattus norvegicus (Rat).